Reading from the N-terminus, the 415-residue chain is Probable glucuronosyltransferase Os03g0287800 (415 aa).

Topologically, residues 1–25 (MGSSTDHGGAGGRGKKGSGSQLWKK) are cytoplasmic. A helical; Signal-anchor for type II membrane protein transmembrane segment spans residues 26–43 (ALLHSSLCFVMGFFTGFA). The Lumenal portion of the chain corresponds to 44-415 (PSSVSDWTSA…GGRFLSGDFC (372 aa)). Asn-78, Asn-165, Asn-257, and Asn-287 each carry an N-linked (GlcNAc...) asparagine glycan.

The protein belongs to the glycosyltransferase 43 family.

It localises to the golgi apparatus membrane. Its function is as follows. Involved in the synthesis of glucuronoxylan hemicellulose in secondary cell walls. The polypeptide is Probable glucuronosyltransferase Os03g0287800 (Oryza sativa subsp. japonica (Rice)).